The chain runs to 467 residues: Cysteine--tRNA ligase (467 aa).

Residue cysteine 29 coordinates Zn(2+). The 'HIGH' region signature appears at 31–41 (PTVYNYIHIGN). Residues cysteine 209, histidine 234, and glutamate 238 each contribute to the Zn(2+) site. Residues 266 to 270 (KMSKS) carry the 'KMSKS' region motif. Lysine 269 provides a ligand contact to ATP. Serine 270 carries the phosphoserine modification.

This sequence belongs to the class-I aminoacyl-tRNA synthetase family. Monomer. Zn(2+) serves as cofactor.

The protein resides in the cytoplasm. The catalysed reaction is tRNA(Cys) + L-cysteine + ATP = L-cysteinyl-tRNA(Cys) + AMP + diphosphate. This is Cysteine--tRNA ligase from Bacillus licheniformis (strain ATCC 14580 / DSM 13 / JCM 2505 / CCUG 7422 / NBRC 12200 / NCIMB 9375 / NCTC 10341 / NRRL NRS-1264 / Gibson 46).